A 746-amino-acid chain; its full sequence is Histone-lysine N-methyltransferase EZH2 (746 aa).

The segment at 1-340 (MGQTGKKSEK…AKEFAAALTA (340 aa)) is interaction with DNMT1, DNMT3A and DNMT3B. Position 21 is a phosphoserine; by PKB/AKT1 (S21). Positions 39–68 (KSMFSSNRQKILERTEILNQEWKQRRIQPV) are interaction with EED. An O-linked (GlcNAc) serine glycan is attached at S75. Position 76 is a phosphoserine (S76). The disordered stretch occupies residues 180–222 (QYNDDDDDDDGDDPEEREEKQKDLEDHRDDKESRPPRKFPSDK). Acidic residues predominate over residues 182–195 (NDDDDDDDGDDPEE). Residues 196-222 (REEKQKDLEDHRDDKESRPPRKFPSDK) show a composition bias toward basic and acidic residues. Residues 329-522 (EGAKEFAAAL…SSNHVYNYQP (194 aa)) form an interaction with CDYL region. T339 is subject to Phosphothreonine. Positions 340 to 426 (AERIKTPPKR…PIKMKPNIEP (87 aa)) are disordered. Phosphothreonine; by CDK1 and CDK2 is present on T345. Residues 345–357 (TPPKRPGGRRRGR) are compositionally biased toward basic residues. S363 and S366 each carry phosphoserine. Position 367 is a phosphothreonine (T367). A compositionally biased stretch (basic and acidic residues) spans 374–385 (ESKDTDSDREAG). T487 carries the post-translational modification Phosphothreonine. One can recognise a CXC domain in the interval 503-605 (CRKIQLKKDG…SKNVSCKNCS (103 aa)). Positions 612 to 727 (KHLLLAPSDV…TGEELFFDYR (116 aa)) constitute an SET domain. Residue K634 forms a Glycyl lysine isopeptide (Lys-Gly) (interchain with G-Cter in SUMO2) linkage.

It belongs to the class V-like SAM-binding methyltransferase superfamily. Histone-lysine methyltransferase family. EZ subfamily. Component of the PRC2/EED-EZH2 complex, which includes EED, EZH2, SUZ12, RBBP4 and RBBP7 and possibly AEBP2. The minimum components required for methyltransferase activity of the PRC2/EED-EZH2 complex are EED, EZH2 and SUZ12. The PRC2 complex may also interact with DNMT1, DNMT3A, DNMT3B and PHF1 via the EZH2 subunit and with SIRT1 via the SUZ12 subunit. Interacts with HDAC1 and HDAC2. Binds ATRX via the SET domain. Interacts with PRAME. Interacts with CDYL. Interacts with CLOCK, BMAL1 and CRY1. Interacts with DNMT3L; the interaction is direct. Interacts with EZHIP; the interaction blocks EZH2 methyltransferase activity. Interacts with ZNF263; recruited to the SIX3 promoter along with other proteins involved in chromatin modification and transcriptional corepression where it contributes to transcriptional repression. Interacts with ARMC12. Interacts with ZMYND8; the interaction is dependent on the presence of chromatin. Interacts with DDX18; this interaction inhibits the PRC2 complex. Phosphorylated by AKT1. Phosphorylation by AKT1 reduces methyltransferase activity. Phosphorylation at Thr-345 by CDK1 and CDK2 promotes maintenance of H3K27me3 levels at EZH2-target loci, thus leading to epigenetic gene silencing. In terms of processing, sumoylated. Post-translationally, glycosylated: O-GlcNAcylation at Ser-75 by OGT increases stability of EZH2 and facilitates the formation of H3K27me3 by the PRC2/EED-EZH2 complex. In the ovary, expressed in primordial follicles and oocytes and also in external follicle cells (at protein level). Expressed in many tissues. Overexpressed in numerous tumor types including carcinomas of the breast, colon, larynx, lymphoma and testis.

The protein resides in the nucleus. The enzyme catalyses L-lysyl(27)-[histone H3] + 3 S-adenosyl-L-methionine = N(6),N(6),N(6)-trimethyl-L-lysyl(27)-[histone H3] + 3 S-adenosyl-L-homocysteine + 3 H(+). Functionally, polycomb group (PcG) protein. Catalytic subunit of the PRC2/EED-EZH2 complex, which methylates 'Lys-9' (H3K9me) and 'Lys-27' (H3K27me) of histone H3, leading to transcriptional repression of the affected target gene. Able to mono-, di- and trimethylate 'Lys-27' of histone H3 to form H3K27me1, H3K27me2 and H3K27me3, respectively. Displays a preference for substrates with less methylation, loses activity when progressively more methyl groups are incorporated into H3K27, H3K27me0 &gt; H3K27me1 &gt; H3K27me2. Compared to EZH1-containing complexes, it is more abundant in embryonic stem cells and plays a major role in forming H3K27me3, which is required for embryonic stem cell identity and proper differentiation. The PRC2/EED-EZH2 complex may also serve as a recruiting platform for DNA methyltransferases, thereby linking two epigenetic repression systems. Genes repressed by the PRC2/EED-EZH2 complex include HOXC8, HOXA9, MYT1, CDKN2A and retinoic acid target genes. EZH2 can also methylate non-histone proteins such as the transcription factor GATA4 and the nuclear receptor RORA. Regulates the circadian clock via histone methylation at the promoter of the circadian genes. Essential for the CRY1/2-mediated repression of the transcriptional activation of PER1/2 by the CLOCK-BMAL1 heterodimer; involved in the di and trimethylation of 'Lys-27' of histone H3 on PER1/2 promoters which is necessary for the CRY1/2 proteins to inhibit transcription. This chain is Histone-lysine N-methyltransferase EZH2, found in Homo sapiens (Human).